Reading from the N-terminus, the 94-residue chain is MRTLTLLSAFLLVALQAWAEPLQARADEMPAQKQPPADDQDVVIYFSGDDSSSLQVPGSTKGLICHCRVLYCLFGEHLGGTSFIHGERYPICCY.

A signal peptide spans 1 to 19; it reads MRTLTLLSAFLLVALQAWA. Intrachain disulfides connect Cys-65–Cys-93 and Cys-72–Cys-92.

The protein belongs to the alpha-defensin family.

The protein resides in the secreted. Its function is as follows. Has antimicrobial activity. The sequence is that of Defensin-7 (DEFA7) from Pan troglodytes (Chimpanzee).